The primary structure comprises 691 residues: Ribonuclease J (691 aa).

Positions 1-89 (MTDNNHYENN…TRNYAKEELD (89 aa)) are disordered. Residues 1 to 132 (MTDNNHYENN…KIQVEHLNPH (132 aa)) form a loss of region decreases protein stability, still able to interact with RhpA, but has decreased RNase activity even on ssRNA region. The segment covering 10-19 (NESNENSSEN) has biased composition (low complexity). The span at 41-57 (RENAQKNGESSHHEAPS) shows a compositional bias: basic and acidic residues. Positions 58-82 (HHKKEHRPNKKPNNHHKQKHAKTRN) are enriched in basic residues. Residues lysine 134 and lysine 140 each carry the N6-acetyllysine modification. Zn(2+) contacts are provided by histidine 208, histidine 210, aspartate 212, histidine 213, histidine 277, and aspartate 299. 3 positions are modified to N6-acetyllysine: lysine 323, lysine 337, and lysine 397. Residue 500 to 504 (HVSGH) coordinates substrate. Lysine 511 bears the N6-acetyllysine mark. Histidine 526 contributes to the Zn(2+) binding site. N6-acetyllysine is present on residues lysine 547, lysine 634, and lysine 649.

This sequence belongs to the metallo-beta-lactamase superfamily. RNA-metabolizing metallo-beta-lactamase-like family. Bacterial RNase J subfamily. Homodimer. Homotetramer; dimer of homodimers. Interacts with RNA helicase RphA, might be a member of a minimal RNA degradosome complex. Zn(2+) serves as cofactor. Acetylated on nine lysine residues. Some of the residues are acetylated by multiple different mechanisms. RimL is partially responsible for the acetylation of Lys-323, Lys-397 and Lys-649. HPB8_1270 homolog is partially responsible for the acetylation of Lys-323, Lys-397, Lys-511 and Lys-649. Acetyl-phosphate-mediated non-enzymatic acetylation pathway takes part in the acetylation of Lys-134, Lys-323, Lys-397, Lys-511 and Lys-649. Acetylation of the remaining residues Lys-140, Lys-337, Lys-547 and Lys-634 occurs by a yet undetermined mechanism. Acetylation on a number of these residues is important for growth regulation and proper cell morphology.

The protein resides in the cytoplasm. Catalytic activity is regulated by the balance between homodimers and homotetramers, with homotetramers being the active forms of this enzyme. Acetylation allosterically regulates the homooligomerization state and hence the catalytic activity. In terms of biological role, an RNase that has 5'-3' exoribonuclease and endoribonuclease activity. Degrades 5'-monophosphorylated ssRNA and dsRNA, considerably more active on ssRNA. Association with RhpA significantly increases the dsRNase activity. Degrades RNA substrate with hairpin structures at both ends with low activity, but presence of RhpA significantly increases the activity on this substrate. Stimulates ATPase activity of RNA helicase RhpA. Involved in stabilization of mRNA but apparently not rRNA. The polypeptide is Ribonuclease J (Helicobacter pylori (strain B128)).